The chain runs to 85 residues: MWPNSILVLMTLLISSTLVTGGGVKGEEKRVCPPDYVRCIRQDDPQCYSDNDCGDQEICCFWQCGFKCVLPVKDNSEEQIPQSKV.

Residues 1-21 (MWPNSILVLMTLLISSTLVTG) form the signal peptide. In terms of domain architecture, WAP spans 25–72 (KGEEKRVCPPDYVRCIRQDDPQCYSDNDCGDQEICCFWQCGFKCVLPV). Cystine bridges form between cysteine 32–cysteine 60, cysteine 39–cysteine 64, cysteine 47–cysteine 59, and cysteine 53–cysteine 68.

As to expression, constitutively expressed in tongue.

Its subcellular location is the secreted. Functionally, antibacterial protein which inhibits the growth of E.coli and S.aureus. Putative acid-stable proteinase inhibitor. The chain is WAP four-disulfide core domain protein 12 from Mus musculus (Mouse).